The sequence spans 188 residues: Ribose 1,5-bisphosphate phosphokinase PhnN (188 aa).

Residue 9 to 16 (GPSGAGKD) participates in ATP binding.

It belongs to the ribose 1,5-bisphosphokinase family.

It carries out the reaction alpha-D-ribose 1,5-bisphosphate + ATP = 5-phospho-alpha-D-ribose 1-diphosphate + ADP. The protein operates within metabolic intermediate biosynthesis; 5-phospho-alpha-D-ribose 1-diphosphate biosynthesis; 5-phospho-alpha-D-ribose 1-diphosphate from D-ribose 5-phosphate (route II): step 3/3. Catalyzes the phosphorylation of ribose 1,5-bisphosphate to 5-phospho-D-ribosyl alpha-1-diphosphate (PRPP). The sequence is that of Ribose 1,5-bisphosphate phosphokinase PhnN from Pectobacterium atrosepticum (strain SCRI 1043 / ATCC BAA-672) (Erwinia carotovora subsp. atroseptica).